Here is a 700-residue protein sequence, read N- to C-terminus: Putative ankyrin repeat protein FPV018 (700 aa).

11 ANK repeats span residues 29–59, 63–92, 126–155, 204–233, 236–265, 270–299, 301–332, 395–424, 428–457, 461–490, and 494–523; these read DRLL…VINM, NRLL…VING, RIRR…DLKM, MRRI…LADT, ALED…DINS, NSHT…DPDI, DIYS…RIRC, CNMY…DVNV, YGKT…NVNE, YGIT…DVNQ, and DKNT…DMCF.

This Fowlpox virus (strain NVSL) (FPV) protein is Putative ankyrin repeat protein FPV018.